A 307-amino-acid chain; its full sequence is Methionyl-tRNA formyltransferase (307 aa).

A (6S)-5,6,7,8-tetrahydrofolate-binding site is contributed by 108–111 (SLLP).

This sequence belongs to the Fmt family.

The enzyme catalyses L-methionyl-tRNA(fMet) + (6R)-10-formyltetrahydrofolate = N-formyl-L-methionyl-tRNA(fMet) + (6S)-5,6,7,8-tetrahydrofolate + H(+). In terms of biological role, attaches a formyl group to the free amino group of methionyl-tRNA(fMet). The formyl group appears to play a dual role in the initiator identity of N-formylmethionyl-tRNA by promoting its recognition by IF2 and preventing the misappropriation of this tRNA by the elongation apparatus. In Xanthomonas axonopodis pv. citri (strain 306), this protein is Methionyl-tRNA formyltransferase.